A 367-amino-acid chain; its full sequence is MYGDATNWNEDEYRESILKEREIETRTVFRTAWAPPARISNPDAFVVASSDGTLAFHSLNSLVSQSASFGYSKGQDVMVAEPERVVRAHEGPAYDVKFYGEDEDALLLSCGDDGRVRGWKWREFAESDVSLHLKENHLKPLLELINPQHKGPWGALSPMPEINAMSVDPQSGSVFTAAGDSCAYCWDVESGKIKMTFKGHSDYLHTVVSRSSASQILTGSEDGTARIWDCKTGKCVKVIGSQDKKSRLRVSSMALDGSESWLVCGQGKNLALWNLPASECVQTIPIPAHVQDVMFDEKQILTVGAEPLLRRFDLNGALLSQIHCAPCSVFSISLHPAGVVAVGGYGGIVDVISQFGSHLCTFRSSSL.

7 WD repeats span residues 23-67, 88-129, 157-196, 199-240, 243-283, 285-322, and 324-363; these read IETR…SQSA, AHEG…ESDV, SPMP…IKMT, GHSD…KVIG, DKKS…CVQT, PIPA…LSQI, and CAPC…CTFR.

It belongs to the WD repeat THOC6 family. As to quaternary structure, component of the THO complex, which is composed of THO1, THO2, THO3, THO5, THO6 and THO7. Interacts with ABI5, DDB1A and DWA2.

The protein localises to the nucleus. Its pathway is protein modification; protein ubiquitination. In terms of biological role, acts as a component of the THO subcomplex of the TREX complex which is thought to couple mRNA transcription, processing and nuclear export. Component of the CUL4-RBX1-DDB1-DWA1/DWA2 E3 ubiquitin-protein ligase complex that acts as a negative regulator in abscisic acid (ABA) signaling. May function as the substrate recognition module within this complex leading to ABI5 degradation. Functionally redundant with DWA2. This chain is THO complex subunit 6 (THO6), found in Arabidopsis thaliana (Mouse-ear cress).